A 104-amino-acid chain; its full sequence is Vegetative-specific protein H7 (104 aa).

The HTH cro/C1-type domain maps to 43 to 97 (IQRARNALKMTQKELAFKINERPGVINEYESGSAIPSQAVLSKLEKALNVKLRGK). A DNA-binding region (H-T-H motif) is located at residues 54–73 (QKELAFKINERPGVINEYES).

The sequence is that of Vegetative-specific protein H7 (cinD-1) from Dictyostelium discoideum (Social amoeba).